We begin with the raw amino-acid sequence, 408 residues long: Peptidase T (408 aa).

Residue His78 coordinates Zn(2+). Residue Asp80 is part of the active site. Position 140 (Asp140) interacts with Zn(2+). The active-site Proton acceptor is the Glu173. The Zn(2+) site is built by Glu174, Asp196, and His379.

This sequence belongs to the peptidase M20B family. Zn(2+) is required as a cofactor.

It localises to the cytoplasm. It carries out the reaction Release of the N-terminal residue from a tripeptide.. Cleaves the N-terminal amino acid of tripeptides. The sequence is that of Peptidase T from Salmonella arizonae (strain ATCC BAA-731 / CDC346-86 / RSK2980).